The following is a 326-amino-acid chain: Pyruvate dehydrogenase E1 component subunit beta (326 aa).

E59 is a binding site for thiamine diphosphate.

As to quaternary structure, heterodimer of an alpha and a beta chain. It depends on thiamine diphosphate as a cofactor.

The enzyme catalyses N(6)-[(R)-lipoyl]-L-lysyl-[protein] + pyruvate + H(+) = N(6)-[(R)-S(8)-acetyldihydrolipoyl]-L-lysyl-[protein] + CO2. Its function is as follows. The pyruvate dehydrogenase complex catalyzes the overall conversion of pyruvate to acetyl-CoA and CO(2). It contains multiple copies of three enzymatic components: pyruvate dehydrogenase (E1), dihydrolipoamide acetyltransferase (E2) and lipoamide dehydrogenase (E3). This is Pyruvate dehydrogenase E1 component subunit beta (pdhB) from Rickettsia conorii (strain ATCC VR-613 / Malish 7).